The chain runs to 207 residues: Interleukin-6 (207 aa).

A signal peptide spans 1-18 (MKFFSIASLGLLLVVATA). Residues 26–47 (REDGENSVTRNKPTRASSGKTR) are disordered. Over residues 31–44 (NSVTRNKPTRASSG) the composition is skewed to polar residues. Residues cysteine 65 and cysteine 71 are joined by a disulfide bond. Position 74 is a phosphoserine (serine 74). Cysteine 94 and cysteine 104 are disulfide-bonded.

This sequence belongs to the IL-6 superfamily. Component of a hexamer of two molecules each of IL6, IL6R and IL6ST; first binds to IL6R to associate with the signaling subunit IL6ST. Interacts with IL6R (via the N-terminal ectodomain); this interaction may be affected by IL6R-binding with SORL1, hence decreasing IL6 cis signaling. Interacts with SORL1 (via the N-terminal ectodomain); this interaction leads to IL6 internalization and lysosomal degradation. May form a trimeric complex with the soluble SORL1 ectodomain and soluble IL6R receptor; this interaction might stabilize circulating IL6, hence promoting IL6 trans signaling.

The protein resides in the secreted. Cytokine with a wide variety of biological functions in immunity, tissue regeneration, and metabolism. Binds to IL6R, then the complex associates to the signaling subunit IL6ST/gp130 to trigger the intracellular IL6-signaling pathway. The interaction with the membrane-bound IL6R and IL6ST stimulates 'classic signaling', whereas the binding of IL6 and soluble IL6R to IL6ST stimulates 'trans-signaling'. Alternatively, 'cluster signaling' occurs when membrane-bound IL6:IL6R complexes on transmitter cells activate IL6ST receptors on neighboring receiver cells. Its function is as follows. IL6 is a potent inducer of the acute phase response. Rapid production of IL6 contributes to host defense during infection and tissue injury, but excessive IL6 synthesis is involved in disease pathology. In the innate immune response, is synthesized by myeloid cells, such as macrophages and dendritic cells, upon recognition of pathogens through toll-like receptors (TLRs) at the site of infection or tissue injury. In the adaptive immune response, is required for the differentiation of B cells into immunoglobulin-secreting cells. Plays a major role in the differentiation of CD4(+) T cell subsets. Essential factor for the development of T follicular helper (Tfh) cells that are required for the induction of germinal-center formation. Required to drive naive CD4(+) T cells to the Th17 lineage. Also required for proliferation of myeloma cells and the survival of plasmablast cells. In terms of biological role, acts as an essential factor in bone homeostasis and on vessels directly or indirectly by induction of VEGF, resulting in increased angiogenesis activity and vascular permeability. Induces, through 'trans-signaling' and synergistically with IL1B and TNF, the production of VEGF. Involved in metabolic controls, is discharged into the bloodstream after muscle contraction increasing lipolysis and improving insulin resistance. 'Trans-signaling' in central nervous system also regulates energy and glucose homeostasis. Mediates, through GLP-1, crosstalk between insulin-sensitive tissues, intestinal L cells and pancreatic islets to adapt to changes in insulin demand. Also acts as a myokine. Plays a protective role during liver injury, being required for maintenance of tissue regeneration. Also has a pivotal role in iron metabolism by regulating HAMP/hepcidin expression upon inflammation or bacterial infection. Through activation of IL6ST-YAP-NOTCH pathway, induces inflammation-induced epithelial regeneration. The sequence is that of Interleukin-6 (IL6) from Marmota monax (Woodchuck).